The following is a 143-amino-acid chain: UPF0292 protein Mbar_A0484 (143 aa).

Residues 28–109 enclose the Toprim domain; the sequence is GAIIIVEGKR…KPELEIRNKL (82 aa). Residues Glu-34, Asp-78, and Asp-80 each contribute to the Mg(2+) site.

Belongs to the UPF0292 family. Mg(2+) is required as a cofactor.

The sequence is that of UPF0292 protein Mbar_A0484 from Methanosarcina barkeri (strain Fusaro / DSM 804).